The sequence spans 109 residues: Small ribosomal subunit protein bS6c (109 aa).

Belongs to the bacterial ribosomal protein bS6 family.

Its subcellular location is the plastid. It localises to the chloroplast. In terms of biological role, binds together with bS18 to 16S ribosomal RNA. The protein is Small ribosomal subunit protein bS6c of Pyropia yezoensis (Susabi-nori).